A 2282-amino-acid polypeptide reads, in one-letter code: Ectopic P granules protein 5 homolog (2282 aa).

This sequence belongs to the EPG5 family.

Involved in autophagy. This chain is Ectopic P granules protein 5 homolog, found in Aedes aegypti (Yellowfever mosquito).